A 141-amino-acid chain; its full sequence is Metallothiol transferase FosB (141 aa).

Positions 5 to 120 (SINHLLFSVS…DGHKFEFHTG (116 aa)) constitute a VOC domain. 3 residues coordinate Mg(2+): histidine 8, histidine 67, and glutamate 116. The Proton donor/acceptor role is filled by glutamate 116.

This sequence belongs to the fosfomycin resistance protein family. FosB subfamily. In terms of assembly, homodimer. Requires Mg(2+) as cofactor.

It is found in the cytoplasm. Functionally, metallothiol transferase which confers resistance to fosfomycin by catalyzing the addition of a thiol cofactor to fosfomycin. L-cysteine is probably the physiological thiol donor. The chain is Metallothiol transferase FosB from Lysinibacillus sphaericus (strain C3-41).